Consider the following 473-residue polypeptide: Methionine aminopeptidase 2 (473 aa).

The interval 23–121 is disordered; sequence LAEDSSNGTQ…KLVSIDQSYP (99 aa). The span at 41–53 shows a compositional bias: polar residues; the sequence is KATTAVGQDNGNN. Acidic residues predominate over residues 73 to 83; that stretch reads DDDDDDEDDDV. Positions 84–93 are enriched in low complexity; that stretch reads AAAAAAVGDA. Residues 97-113 show a composition bias toward basic residues; sequence KKKKKKKSSNKKKKKKL. His-224 is a binding site for substrate. Residues Asp-244, Asp-255, and His-326 each contribute to the a divalent metal cation site. His-334 serves as a coordination point for substrate. A divalent metal cation is bound by residues Glu-359 and Glu-454.

The protein belongs to the peptidase M24A family. Methionine aminopeptidase eukaryotic type 2 subfamily. Co(2+) is required as a cofactor. Zn(2+) serves as cofactor. Requires Mn(2+) as cofactor. It depends on Fe(2+) as a cofactor.

It localises to the cytoplasm. The catalysed reaction is Release of N-terminal amino acids, preferentially methionine, from peptides and arylamides.. Functionally, cotranslationally removes the N-terminal methionine from nascent proteins. The N-terminal methionine is often cleaved when the second residue in the primary sequence is small and uncharged (Met-Ala-, Cys, Gly, Pro, Ser, Thr, or Val). This Lodderomyces elongisporus (strain ATCC 11503 / CBS 2605 / JCM 1781 / NBRC 1676 / NRRL YB-4239) (Yeast) protein is Methionine aminopeptidase 2.